The following is a 134-amino-acid chain: ATP synthase epsilon chain (134 aa).

Belongs to the ATPase epsilon chain family. In terms of assembly, F-type ATPases have 2 components, CF(1) - the catalytic core - and CF(0) - the membrane proton channel. CF(1) has five subunits: alpha(3), beta(3), gamma(1), delta(1), epsilon(1). CF(0) has three main subunits: a, b and c.

It localises to the cell membrane. Produces ATP from ADP in the presence of a proton gradient across the membrane. In Priestia megaterium (strain ATCC 12872 / QMB1551) (Bacillus megaterium), this protein is ATP synthase epsilon chain (atpC).